A 157-amino-acid chain; its full sequence is Putative pre-16S rRNA nuclease (157 aa).

It belongs to the YqgF nuclease family.

It localises to the cytoplasm. Its function is as follows. Could be a nuclease involved in processing of the 5'-end of pre-16S rRNA. This Nitrosomonas eutropha (strain DSM 101675 / C91 / Nm57) protein is Putative pre-16S rRNA nuclease.